The chain runs to 144 residues: Maximins 2/H8 type 1 (144 aa).

Positions 1–18 are cleaved as a signal peptide; the sequence is MNFKYIVAVSFLIASAYA. The propeptide occupies 19–43; the sequence is RSEENEIQSLSQRDVLEEESLREMR. An Asparagine amide modification is found at N70. Residues 74 to 123 constitute a propeptide that is removed on maturation; that stretch reads TAEEHEVMKRLETVMRDLDSLDYPEEASERETRGFNQEEIANLFTKKEKR. An Isoleucine amide modification is found at I143.

The protein belongs to the bombinin family. In terms of tissue distribution, expressed by the skin glands.

It is found in the secreted. In terms of biological role, maximin-2 shows antibacterial activity against both Gram-positive and Gram-negative bacteria. It also shows antimicrobial activity against the fungus C.albicans, but not against A.flavus nor P.uticale. It has little hemolytic activity. Functionally, maximin-H8 shows antimicrobial activity against bacteria and against the fungus C.albicans. Shows strong hemolytic activity. The chain is Maximins 2/H8 type 1 from Bombina maxima (Giant fire-bellied toad).